The following is a 330-amino-acid chain: Protoheme IX farnesyltransferase (330 aa).

The next 9 membrane-spanning stretches (helical) occupy residues 30-50, 58-78, 106-126, 127-147, 155-175, 182-202, 228-248, 249-269, and 281-301; these read LVKP…MWMA, FFIT…INMV, LIFS…FTNL, LAAG…THWL, IVIG…ATTG, WVMF…LAIL, ILLY…PLGM, LGSF…WKAV, and AASL…AMGL.

Belongs to the UbiA prenyltransferase family. Protoheme IX farnesyltransferase subfamily.

It localises to the cell inner membrane. It catalyses the reaction heme b + (2E,6E)-farnesyl diphosphate + H2O = Fe(II)-heme o + diphosphate. Its pathway is porphyrin-containing compound metabolism; heme O biosynthesis; heme O from protoheme: step 1/1. In terms of biological role, converts heme B (protoheme IX) to heme O by substitution of the vinyl group on carbon 2 of heme B porphyrin ring with a hydroxyethyl farnesyl side group. The protein is Protoheme IX farnesyltransferase of Synechococcus sp. (strain JA-2-3B'a(2-13)) (Cyanobacteria bacterium Yellowstone B-Prime).